A 96-amino-acid chain; its full sequence is Small ribosomal subunit protein bS18 (96 aa).

Belongs to the bacterial ribosomal protein bS18 family. In terms of assembly, part of the 30S ribosomal subunit. Forms a tight heterodimer with protein bS6.

Its function is as follows. Binds as a heterodimer with protein bS6 to the central domain of the 16S rRNA, where it helps stabilize the platform of the 30S subunit. The chain is Small ribosomal subunit protein bS18 from Borrelia garinii subsp. bavariensis (strain ATCC BAA-2496 / DSM 23469 / PBi) (Borreliella bavariensis).